We begin with the raw amino-acid sequence, 368 residues long: Protein HGH1 homolog (368 aa).

This sequence belongs to the HGH1 family.

In Drosophila pseudoobscura pseudoobscura (Fruit fly), this protein is Protein HGH1 homolog.